The primary structure comprises 61 residues: Large ribosomal subunit protein bL32 (61 aa).

Residues 1 to 16 (MAVPKRKTSPSKRGMR) show a composition bias toward basic residues. Residues 1–41 (MAVPKRKTSPSKRGMRRSADALKASTYVEDKNSGELRRPHH) are disordered. Residues 28-41 (VEDKNSGELRRPHH) are compositionally biased toward basic and acidic residues.

It belongs to the bacterial ribosomal protein bL32 family.

The chain is Large ribosomal subunit protein bL32 from Rhizobium rhizogenes (strain K84 / ATCC BAA-868) (Agrobacterium radiobacter).